An 88-amino-acid polypeptide reads, in one-letter code: Small ribosomal subunit protein uS15 (88 aa).

The protein belongs to the universal ribosomal protein uS15 family. In terms of assembly, part of the 30S ribosomal subunit. Forms a bridge to the 50S subunit in the 70S ribosome, contacting the 23S rRNA.

In terms of biological role, one of the primary rRNA binding proteins, it binds directly to 16S rRNA where it helps nucleate assembly of the platform of the 30S subunit by binding and bridging several RNA helices of the 16S rRNA. Functionally, forms an intersubunit bridge (bridge B4) with the 23S rRNA of the 50S subunit in the ribosome. This chain is Small ribosomal subunit protein uS15, found in Francisella tularensis subsp. novicida (strain U112).